A 1305-amino-acid chain; its full sequence is Contactin-associated protein-like 5 (1305 aa).

An N-terminal signal peptide occupies residues 1–24 (MDSVPRLTGVFTLLLSGLWHLGSS). Residues 25-1236 (ATNYNCDDPL…PLTNAVRSDS (1212 aa)) lie on the Extracellular side of the membrane. Positions 30-174 (CDDPLASLLS…IGMRVEVYGC (145 aa)) constitute an F5/8 type C domain. A disulfide bridge links cysteine 30 with cysteine 174. Laminin G-like domains lie at 180–360 (VADF…TFSC) and 367–544 (PITF…IDLC). 3 N-linked (GlcNAc...) asparagine glycosylation sites follow: asparagine 282, asparagine 355, and asparagine 496. A disulfide bridge connects residues cysteine 329 and cysteine 360. 4 disulfide bridges follow: cysteine 512/cysteine 544, cysteine 550/cysteine 561, cysteine 555/cysteine 570, and cysteine 572/cysteine 582. The EGF-like 1 domain occupies 546–583 (IKDRCLPNYCEHGGFCSQSWTTFYCNCSNTGYTGATCH). Residues 584-790 (NSLYEQSCEV…LRCYGDRHFW (207 aa)) form the Fibrinogen C-terminal domain. Residue asparagine 622 is glycosylated (N-linked (GlcNAc...) asparagine). Residues 791–956 (NAVSFYTEAS…KVTSGVRPGC (166 aa)) enclose the Laminin G-like 3 domain. 5 disulfide bridges follow: cysteine 929/cysteine 956, cysteine 960/cysteine 973, cysteine 967/cysteine 982, cysteine 984/cysteine 994, and cysteine 1163/cysteine 1198. In terms of domain architecture, EGF-like 2 spans 957 to 995 (PGHCSTYGSICHNGGKCVEKYSGYFCDCTNSPYEGPFCK). A Laminin G-like 4 domain is found at 1000-1198 (AVFEAGTSVT…VQGTLMESSC (199 aa)). A helical membrane pass occupies residues 1237-1257 (AVIGGVIAVVIFIIFSIIGIM). Residues 1258–1305 (TRFLYQHKQSHRTNQMKEKEYPENLDSSFRNDIDLQNTVSECKREYFI) lie on the Cytoplasmic side of the membrane.

It belongs to the neurexin family.

Its subcellular location is the membrane. Functionally, may play a role in the correct development and proper functioning of the peripheral and central nervous system and be involved in cell adhesion and intercellular communication. The protein is Contactin-associated protein-like 5 (CNTNAP5) of Canis lupus familiaris (Dog).